Here is a 233-residue protein sequence, read N- to C-terminus: Large ribosomal subunit protein uL1 (233 aa).

Belongs to the universal ribosomal protein uL1 family. Part of the 50S ribosomal subunit.

In terms of biological role, binds directly to 23S rRNA. The L1 stalk is quite mobile in the ribosome, and is involved in E site tRNA release. Its function is as follows. Protein L1 is also a translational repressor protein, it controls the translation of the L11 operon by binding to its mRNA. The polypeptide is Large ribosomal subunit protein uL1 (Shewanella denitrificans (strain OS217 / ATCC BAA-1090 / DSM 15013)).